A 267-amino-acid polypeptide reads, in one-letter code: Tryptophan synthase alpha chain (267 aa).

Active-site proton acceptor residues include glutamate 49 and aspartate 60.

This sequence belongs to the TrpA family. In terms of assembly, tetramer of two alpha and two beta chains.

It catalyses the reaction (1S,2R)-1-C-(indol-3-yl)glycerol 3-phosphate + L-serine = D-glyceraldehyde 3-phosphate + L-tryptophan + H2O. Its pathway is amino-acid biosynthesis; L-tryptophan biosynthesis; L-tryptophan from chorismate: step 5/5. Its function is as follows. The alpha subunit is responsible for the aldol cleavage of indoleglycerol phosphate to indole and glyceraldehyde 3-phosphate. The protein is Tryptophan synthase alpha chain of Acidothermus cellulolyticus (strain ATCC 43068 / DSM 8971 / 11B).